The following is a 166-amino-acid chain: UPF0251 protein UNCMA_27150 (166 aa).

This sequence belongs to the UPF0251 family.

The polypeptide is UPF0251 protein UNCMA_27150 (Methanocella arvoryzae (strain DSM 22066 / NBRC 105507 / MRE50)).